The sequence spans 345 residues: N-glycosylase/DNA lyase (345 aa).

Positions 149, 154, and 204 each coordinate DNA. Residue lysine 249 is the Schiff-base intermediate with DNA of the active site. 2 residues coordinate 8-oxoguanine: proline 266 and aspartate 268. DNA contacts are provided by histidine 270 and glutamine 287. The 8-oxoguanine site is built by glutamine 315 and phenylalanine 319. The span at 324 to 334 shows a compositional bias: basic and acidic residues; sequence RQSRHAQEPPA. Residues 324–345 are disordered; that stretch reads RQSRHAQEPPAKRRKGSKGPEG. Basic residues predominate over residues 335-345; it reads KRRKGSKGPEG.

This sequence belongs to the type-1 OGG1 family. As to expression, ubiquitous.

It is found in the nucleus. The protein resides in the nucleoplasm. The protein localises to the nucleus speckle. Its subcellular location is the nucleus matrix. It localises to the mitochondrion. It carries out the reaction 2'-deoxyribonucleotide-(2'-deoxyribose 5'-phosphate)-2'-deoxyribonucleotide-DNA = a 3'-end 2'-deoxyribonucleotide-(2,3-dehydro-2,3-deoxyribose 5'-phosphate)-DNA + a 5'-end 5'-phospho-2'-deoxyribonucleoside-DNA + H(+). Its function is as follows. DNA repair enzyme that incises DNA at 8-oxoG residues. Excises 7,8-dihydro-8-oxoguanine and 2,6-diamino-4-hydroxy-5-N-methylformamidopyrimidine (FAPY) from damaged DNA. Has a beta-lyase activity that nicks DNA 3' to the lesion. The chain is N-glycosylase/DNA lyase (OGG1) from Homo sapiens (Human).